A 357-amino-acid polypeptide reads, in one-letter code: Heat-inducible transcription repressor HrcA (357 aa).

It belongs to the HrcA family.

In terms of biological role, negative regulator of class I heat shock genes (grpE-dnaK-dnaJ and groELS operons). Prevents heat-shock induction of these operons. This is Heat-inducible transcription repressor HrcA from Ureaplasma parvum serovar 3 (strain ATCC 27815 / 27 / NCTC 11736).